The sequence spans 65 residues: Large ribosomal subunit protein bL35 (65 aa).

Positions 1–28 (MPKMKTHRGAAKRFKKTGTGKIKRGQSK) are disordered.

This sequence belongs to the bacterial ribosomal protein bL35 family.

This Acidobacterium capsulatum (strain ATCC 51196 / DSM 11244 / BCRC 80197 / JCM 7670 / NBRC 15755 / NCIMB 13165 / 161) protein is Large ribosomal subunit protein bL35.